A 141-amino-acid chain; its full sequence is Hemoglobin subunit alpha (141 aa).

A Globin domain is found at valine 1–arginine 141. Serine 3 carries the phosphoserine modification. Residues lysine 7 and lysine 11 each carry the N6-succinyllysine modification. Residue lysine 16 is modified to N6-acetyllysine; alternate. Residue lysine 16 is modified to N6-succinyllysine; alternate. Tyrosine 24 is modified (phosphotyrosine). Lysine 40 carries the N6-succinyllysine modification. Phosphoserine is present on serine 49. Histidine 58 serves as a coordination point for O2. Histidine 87 serves as a coordination point for heme b. Serine 102 bears the Phosphoserine mark. At threonine 108 the chain carries Phosphothreonine. Serine 124 carries the post-translational modification Phosphoserine. A phosphothreonine mark is found at threonine 134 and threonine 137. Phosphoserine is present on serine 138.

Belongs to the globin family. In terms of assembly, heterotetramer of two alpha chains and two beta chains. Red blood cells.

Its function is as follows. Involved in oxygen transport from the lung to the various peripheral tissues. In terms of biological role, hemopressin acts as an antagonist peptide of the cannabinoid receptor CNR1. Hemopressin-binding efficiently blocks cannabinoid receptor CNR1 and subsequent signaling. In Lama glama (Llama), this protein is Hemoglobin subunit alpha (HBA).